The primary structure comprises 132 residues: Small ribosomal subunit protein uS9 (132 aa).

It belongs to the universal ribosomal protein uS9 family.

The sequence is that of Small ribosomal subunit protein uS9 (rps9) from Thermoplasma volcanium (strain ATCC 51530 / DSM 4299 / JCM 9571 / NBRC 15438 / GSS1).